The primary structure comprises 191 residues: Holliday junction branch migration complex subunit RuvA (191 aa).

The interval 1–64 (MIGRITGTLA…EDAHLLYGFG (64 aa)) is domain I. Residues 65 to 138 (SEVERAAFRE…KGKPVFAGAL (74 aa)) are domain II. Positions 138 to 141 (LASV) are flexible linker. The tract at residues 142–191 (PSAGASDDVRQALLALGYNERETAATVRELPAGLAVGEAIRQALRALSRA) is domain III.

The protein belongs to the RuvA family. Homotetramer. Forms an RuvA(8)-RuvB(12)-Holliday junction (HJ) complex. HJ DNA is sandwiched between 2 RuvA tetramers; dsDNA enters through RuvA and exits via RuvB. An RuvB hexamer assembles on each DNA strand where it exits the tetramer. Each RuvB hexamer is contacted by two RuvA subunits (via domain III) on 2 adjacent RuvB subunits; this complex drives branch migration. In the full resolvosome a probable DNA-RuvA(4)-RuvB(12)-RuvC(2) complex forms which resolves the HJ.

The protein resides in the cytoplasm. Functionally, the RuvA-RuvB-RuvC complex processes Holliday junction (HJ) DNA during genetic recombination and DNA repair, while the RuvA-RuvB complex plays an important role in the rescue of blocked DNA replication forks via replication fork reversal (RFR). RuvA specifically binds to HJ cruciform DNA, conferring on it an open structure. The RuvB hexamer acts as an ATP-dependent pump, pulling dsDNA into and through the RuvAB complex. HJ branch migration allows RuvC to scan DNA until it finds its consensus sequence, where it cleaves and resolves the cruciform DNA. In Thiobacillus denitrificans (strain ATCC 25259 / T1), this protein is Holliday junction branch migration complex subunit RuvA.